The following is a 1082-amino-acid chain: Error-prone DNA polymerase (1082 aa).

It belongs to the DNA polymerase type-C family. DnaE2 subfamily.

Its subcellular location is the cytoplasm. The enzyme catalyses DNA(n) + a 2'-deoxyribonucleoside 5'-triphosphate = DNA(n+1) + diphosphate. In terms of biological role, DNA polymerase involved in damage-induced mutagenesis and translesion synthesis (TLS). It is not the major replicative DNA polymerase. This chain is Error-prone DNA polymerase, found in Xanthomonas campestris pv. campestris (strain B100).